A 542-amino-acid chain; its full sequence is Amino-acid acetyltransferase, mitochondrial (542 aa).

The N-terminal 14 residues, 1 to 14 (MLFRRLLTTKVGYH), are a transit peptide targeting the mitochondrion. In terms of domain architecture, N-acetyltransferase spans 368 to 534 (AGSAQLPAHK…LREYITYVRD (167 aa)).

This sequence belongs to the acetyltransferase family.

It localises to the mitochondrion. It carries out the reaction L-glutamate + acetyl-CoA = N-acetyl-L-glutamate + CoA + H(+). It functions in the pathway amino-acid biosynthesis; L-arginine biosynthesis; N(2)-acetyl-L-ornithine from L-glutamate: step 1/4. In terms of biological role, N-acetylglutamate synthase involved in arginine biosynthesis. The chain is Amino-acid acetyltransferase, mitochondrial (ARG2) from Eremothecium gossypii (strain ATCC 10895 / CBS 109.51 / FGSC 9923 / NRRL Y-1056) (Yeast).